A 527-amino-acid chain; its full sequence is T-complex protein 1 subunit delta (527 aa).

The protein belongs to the TCP-1 chaperonin family. Heterooligomeric complex of about 850 to 900 kDa that forms two stacked rings, 12 to 16 nm in diameter.

Its subcellular location is the cytoplasm. Functionally, molecular chaperone; assists the folding of proteins upon ATP hydrolysis. Known to play a role, in vitro, in the folding of actin and tubulin. The sequence is that of T-complex protein 1 subunit delta (cct4) from Schizosaccharomyces pombe (strain 972 / ATCC 24843) (Fission yeast).